Here is a 494-residue protein sequence, read N- to C-terminus: Transmembrane and coiled-coil domain-containing protein 6 (494 aa).

Positions 15-39 (GVEELRRRRREREAALRKARREQQL) form a coiled coil. Helical transmembrane passes span 338–358 (LVAA…ALLP) and 386–406 (PLLQ…TVLC).

The protein resides in the membrane. This is Transmembrane and coiled-coil domain-containing protein 6 (Tmco6) from Mus musculus (Mouse).